We begin with the raw amino-acid sequence, 205 residues long: N-(5'-phosphoribosyl)anthranilate isomerase (205 aa).

It belongs to the TrpF family.

The enzyme catalyses N-(5-phospho-beta-D-ribosyl)anthranilate = 1-(2-carboxyphenylamino)-1-deoxy-D-ribulose 5-phosphate. The protein operates within amino-acid biosynthesis; L-tryptophan biosynthesis; L-tryptophan from chorismate: step 3/5. This Thiobacillus denitrificans (strain ATCC 25259 / T1) protein is N-(5'-phosphoribosyl)anthranilate isomerase.